We begin with the raw amino-acid sequence, 267 residues long: Small ribosomal subunit protein uS2 (267 aa).

The segment at 1-72 (MSGNEKEGLD…QLDEDVMPDE (72 aa)) is disordered. The segment covering 10–72 (DASDSDFDPS…QLDEDVMPDE (63 aa)) has biased composition (acidic residues).

The protein belongs to the universal ribosomal protein uS2 family. In terms of processing, the N-terminus is blocked.

This is Small ribosomal subunit protein uS2 (rps2) from Haloarcula marismortui (strain ATCC 43049 / DSM 3752 / JCM 8966 / VKM B-1809) (Halobacterium marismortui).